A 4391-amino-acid chain; its full sequence is Basement membrane-specific heparan sulfate proteoglycan core protein (4391 aa).

The first 21 residues, 1 to 21 (MGWRAAGALLLALLLHGRLLA), serve as a signal peptide directing secretion. Threonine 42 is a glycosylation site (O-linked (GalNAc...) threonine). Residues serine 65, serine 71, and serine 76 are each glycosylated (O-linked (Xyl...) (heparan sulfate) serine). Positions 80–191 (QMVYFRALVN…QGFQFRRLGT (112 aa)) constitute an SEA domain. N-linked (GlcNAc...) asparagine glycosylation is present at asparagine 89. 4 LDL-receptor class A domains span residues 198–235 (ACTEAEFACHSYNECVALEYRCDRRPDCRDMSDELNCE), 284–320 (PCGPQEAACRNGHCIPRDYLCDGQEDCEDGSDELDCG), 324–360 (PCEPNEFPCGNGHCALKLWRCDGDFDCEDRTDEANCP), and 367–404 (VCGPTQFRCVSTNMCIPASFHCDEESDCPDRSDEFGCM). Disulfide bonds link cysteine 199–cysteine 212, cysteine 206–cysteine 225, cysteine 219–cysteine 234, cysteine 285–cysteine 297, cysteine 292–cysteine 310, cysteine 304–cysteine 319, cysteine 325–cysteine 337, cysteine 332–cysteine 350, cysteine 344–cysteine 359, cysteine 368–cysteine 381, cysteine 375–cysteine 394, and cysteine 388–cysteine 403. Residues 405–504 (PPQVVTPPRE…VLELVPQRGP (100 aa)) form the Ig-like C2-type 1 domain. In terms of domain architecture, Laminin EGF-like 1; first part spans 521–530 (CFCFGITSVC). The 193-residue stretch at 538–730 (DQIRLRFDQP…SHGRAHSVEE (193 aa)) folds into the Laminin IV type A 1 domain. A glycan (N-linked (GlcNAc...) asparagine) is linked at asparagine 554. The Laminin EGF-like 1; second part domain occupies 731–763 (CRCPIGYSGLSCESCDAHFTRVPGGPYLGTCSG). Intrachain disulfides connect cysteine 764-cysteine 773, cysteine 766-cysteine 780, cysteine 783-cysteine 792, cysteine 795-cysteine 811, cysteine 814-cysteine 829, cysteine 816-cysteine 839, cysteine 842-cysteine 851, cysteine 854-cysteine 869, cysteine 879-cysteine 892, cysteine 894-cysteine 903, and cysteine 906-cysteine 921. Laminin EGF-like domains follow at residues 764 to 813 (CNCN…SCRP) and 814 to 871 (CPCP…KCRP). The Laminin EGF-like 4; truncated domain occupies 879–923 (CDERGSMGTSGEACRCKNNVVGRLCNECADGSFHLSTRNPDGCLK). The Laminin EGF-like 5; first part domain occupies 924–933 (CFCMGVSRHC). Residues 941-1125 (AQLHGASEEP…GQDPALEVEQ (185 aa)) enclose the Laminin IV type A 2 domain. The 33-residue stretch at 1126–1158 (CSCPPGYRGPSCQDCDTGYTRTPSGLYLGTCER) folds into the Laminin EGF-like 5; second part domain. Cystine bridges form between cysteine 1159-cysteine 1168, cysteine 1161-cysteine 1175, cysteine 1178-cysteine 1187, cysteine 1190-cysteine 1206, cysteine 1209-cysteine 1224, cysteine 1211-cysteine 1234, cysteine 1237-cysteine 1246, cysteine 1249-cysteine 1263, cysteine 1275-cysteine 1287, cysteine 1277-cysteine 1293, cysteine 1295-cysteine 1304, and cysteine 1307-cysteine 1322. 3 consecutive Laminin EGF-like domains span residues 1159 to 1208 (CSCH…DCQL), 1209 to 1265 (CPCY…PCQR), and 1275 to 1324 (CNCD…GCLP). Residues 1325–1334 (CFCMGITQQC) enclose the Laminin EGF-like 9; first part domain. The region spanning 1344-1529 (ISTHFAPGDF…NRPRALEVEE (186 aa)) is the Laminin IV type A 3 domain. Residues 1530 to 1562 (CRCPPGYIGLSCQDCAPGYTRTGSGLYLGHCEL) enclose the Laminin EGF-like 9; second part domain. 8 disulfide bridges follow: cysteine 1563–cysteine 1572, cysteine 1565–cysteine 1579, cysteine 1582–cysteine 1591, cysteine 1594–cysteine 1610, cysteine 1613–cysteine 1628, cysteine 1615–cysteine 1638, cysteine 1641–cysteine 1650, and cysteine 1653–cysteine 1668. Laminin EGF-like domains are found at residues 1563–1612 (CECN…DCQP) and 1613–1670 (CACP…QCLP). Ig-like C2-type domains lie at 1677 to 1771 (LVVE…SKPI), 1772 to 1865 (TVTV…TLSA), 1866 to 1955 (PVVS…GGGG), 1956 to 2051 (PRVQ…ASPP), 2052 to 2151 (PVKI…PGST), 2152 to 2244 (RPIR…PGPI), 2245 to 2340 (PPVR…AGST), 2341 to 2436 (QPIR…LGVT), 2437 to 2533 (PTVR…QGVA), 2534 to 2629 (YPVR…PSVS), 2630 to 2726 (PPIR…PGSS), 2727 to 2826 (MPIR…PGGA), 2827 to 2924 (PPIR…PGLA), 2925 to 3021 (QPIY…RLRS), 3022 to 3112 (PVIS…HGPP), 3113 to 3211 (TVSV…APGA), 3212 to 3298 (PQVQ…VESP), 3299 to 3399 (PYAT…AGST), 3400 to 3488 (PTVQ…ALPS), 3489 to 3574 (VLIN…LVQA), and 3575 to 3662 (LPQI…PERV). N-linked (GlcNAc...) asparagine glycosylation occurs at asparagine 1755. N-linked (GlcNAc...) asparagine glycosylation occurs at asparagine 2121. Residues 2994–3014 (ASGPGPEQEASFTVTVPPSEG) are disordered. An O-linked (Xyl...) (chondroitin sulfate) serine glycan is attached at serine 2995. A compositionally biased stretch (polar residues) spans 3003–3014 (ASFTVTVPPSEG). 2 N-linked (GlcNAc...) asparagine glycosylation sites follow: asparagine 3072 and asparagine 3105. Asparagine 3279 carries an N-linked (GlcNAc...) asparagine glycan. The region spanning 3663 to 3843 (VPYFTQTPYS…DLNLTAHGIS (181 aa)) is the Laminin G-like 1 domain. Asparagine 3780 and asparagine 3836 each carry an N-linked (GlcNAc...) asparagine glycan. 7 cysteine pairs are disulfide-bonded: cysteine 3819-cysteine 3845, cysteine 3848-cysteine 3859, cysteine 3853-cysteine 3869, cysteine 3871-cysteine 3880, cysteine 3888-cysteine 3899, cysteine 3893-cysteine 3910, and cysteine 3912-cysteine 3921. EGF-like domains follow at residues 3844–3881 (HCPTCRDRPCQNGGQCHDSESSSYVCVCPAGFTGSRCE) and 3884–3922 (QALHCHPEACGPDATCVNRPDGRGYTCRCHLGRSGLRCE). One can recognise a Laminin G-like 2 domain in the interval 3928–4103 (TTPSLSGAGS…LGSQGIGQCY (176 aa)). The O-linked (Xyl...) (chondroitin sulfate) serine glycan is linked to serine 3933. Asparagine 4068 carries N-linked (GlcNAc...) asparagine glycosylation. 7 disulfides stabilise this stretch: cysteine 4076–cysteine 4102, cysteine 4108–cysteine 4119, cysteine 4113–cysteine 4129, cysteine 4131–cysteine 4140, cysteine 4147–cysteine 4159, cysteine 4153–cysteine 4164, and cysteine 4166–cysteine 4175. 2 EGF-like domains span residues 4104-4141 (DSSPCERQPCQHGATCMPAGEYEFQCLCRDGFKGDLCE) and 4143-4176 (EENPCQLREPCLHGGTCQGTRCLCLPGFSGPRCQ). The tract at residues 4149–4151 (LRE) is mediates motor neuron attachment. 2 O-linked (Xyl...) (chondroitin sulfate) serine glycosylation sites follow: serine 4179 and serine 4193. The region spanning 4201 to 4389 (QYGAYFHDDG…AQAGANTRPC (189 aa)) is the Laminin G-like 3 domain. Aspartate 4258 and leucine 4275 together coordinate Ca(2+). The mediates motor neuron attachment stretch occupies residues 4299–4301 (LRE). Ca(2+) is bound by residues alanine 4325 and asparagine 4327. A disulfide bridge links cysteine 4355 with cysteine 4389. A disordered region spans residues 4364-4391 (ARPGAPPPQPLDLQHRAQAGANTRPCPS).

In terms of assembly, has a strong tendency to aggregate in dimers or stellate structures. Interacts with other basement membrane components such as laminin, prolargin and collagen type IV. Interacts with COL13A1. Interacts with FGFBP1. Interacts with VWA1. Interacts (via C-terminus) with ECM1 (via C-terminus). Interacts with SVEP1. Post-translationally, proteolytic processing produces the C-terminal angiogenic peptide, endorepellin. This peptide can be further processed to produce the LG3 peptide. In terms of processing, O-glycosylated with core 1 or possibly core 8 glycans. Contains three heparan sulfate chains. Also contains chondroitin sulfate. In terms of tissue distribution, detected in cerebrospinal fluid, fibroblasts and urine (at protein level).

Its subcellular location is the secreted. The protein resides in the extracellular space. The protein localises to the extracellular matrix. It is found in the basement membrane. Its function is as follows. Integral component of basement membranes. Component of the glomerular basement membrane (GBM), responsible for the fixed negative electrostatic membrane charge, and which provides a barrier which is both size- and charge-selective. It serves as an attachment substrate for cells. Plays essential roles in vascularization. Critical for normal heart development and for regulating the vascular response to injury. Also required for avascular cartilage development. Functionally, anti-angiogenic and anti-tumor peptide that inhibits endothelial cell migration, collagen-induced endothelial tube morphogenesis and blood vessel growth in the chorioallantoic membrane. Blocks endothelial cell adhesion to fibronectin and type I collagen. Anti-tumor agent in neovascularization. Interaction with its ligand, integrin alpha2/beta1, is required for the anti-angiogenic properties. Evokes a reduction in phosphorylation of receptor tyrosine kinases via alpha2/beta1 integrin-mediated activation of the tyrosine phosphatase, PTPN6. In terms of biological role, has anti-angiogenic properties that require binding of calcium ions for full activity. The sequence is that of Basement membrane-specific heparan sulfate proteoglycan core protein (HSPG2) from Homo sapiens (Human).